A 475-amino-acid polypeptide reads, in one-letter code: Arginine/ornithine antiporter (475 aa).

12 consecutive transmembrane segments (helical) span residues 10–30 (IGLLALIALVISSSIGSGVFG), 42–62 (GPVLIAWVIVGFGILMLALSL), 74–94 (GIFSYAEKGFGPFAGFISGWG), 101–121 (LGNVTFATILMSALGYFFPIF), 157–177 (LVTICKLIPLFVFIIFGIVLF), 205–225 (NCMMVMMWVFVGIEGASMLSA), 238–258 (ILGLVSLLAIYILASVLPYGY), 283–303 (WGGYFIGVGLIISILGAWLSW), 333–353 (PTFALVVTAGLIQVFLFTLLF), 361–381 (AYSLCTASIIVCYMLVAAYQI), 397–417 (LLIGVLALLFEIAGILMAGVS), and 451–471 (WLITTIIVIGAIIGIWLVVSG).

The protein belongs to the amino acid-polyamine-organocation (APC) superfamily. Basic amino acid/polyamine antiporter (APA) (TC 2.A.3.2) family.

It localises to the cell membrane. The enzyme catalyses L-ornithine(in) + L-arginine(out) = L-ornithine(out) + L-arginine(in). Functionally, catalyzes electroneutral exchange between L-arginine and L-ornithine. In Latilactobacillus sakei (Lactobacillus sakei), this protein is Arginine/ornithine antiporter (arcD).